We begin with the raw amino-acid sequence, 277 residues long: Inositol monophosphatase 1 (277 aa).

Mg(2+) is bound by residues Glu70, Asp90, Ile92, and Asp93. Substrate is bound at residue Glu70. Substrate is bound at residue 92–95 (IDGT). Thr168 carries the phosphothreonine modification. Residues 194–196 (GTA), Glu213, and Asp220 contribute to the substrate site. Residue Asp220 coordinates Mg(2+).

Belongs to the inositol monophosphatase superfamily. In terms of assembly, homodimer. Mg(2+) is required as a cofactor.

It is found in the cytoplasm. It catalyses the reaction a myo-inositol phosphate + H2O = myo-inositol + phosphate. It carries out the reaction 1D-myo-inositol 1-phosphate + H2O = myo-inositol + phosphate. The enzyme catalyses 1D-myo-inositol 2-phosphate + H2O = myo-inositol + phosphate. The catalysed reaction is 1D-myo-inositol 3-phosphate + H2O = myo-inositol + phosphate. It catalyses the reaction 1D-myo-inositol 4-phosphate + H2O = myo-inositol + phosphate. It carries out the reaction 1D-myo-inositol 5-phosphate + H2O = myo-inositol + phosphate. The enzyme catalyses 1D-myo-inositol 6-phosphate + H2O = myo-inositol + phosphate. The catalysed reaction is scyllo-inositol 1-phosphate + H2O = scyllo-inositol + phosphate. It catalyses the reaction alpha-D-galactose 1-phosphate + H2O = D-galactose + phosphate. It carries out the reaction alpha-D-glucose 1-phosphate + H2O = D-glucose + phosphate. The enzyme catalyses D-glucose 6-phosphate + H2O = D-glucose + phosphate. The catalysed reaction is beta-D-fructose 1-phosphate + H2O = D-fructose + phosphate. It catalyses the reaction glycerol 2-phosphate + H2O = glycerol + phosphate. It carries out the reaction adenosine 2'-phosphate + H2O = adenosine + phosphate. It functions in the pathway polyol metabolism; myo-inositol biosynthesis; myo-inositol from D-glucose 6-phosphate: step 2/2. Its activity is regulated as follows. Inhibited by Li(+), Ca(2+) and Mn(2+), but also by Mg(2+) at concentrations above 3 mM. Functionally, phosphatase involved in the dephosphorylation of myo-inositol monophosphate to generate myo-inositol. Is also able to dephosphorylate scyllo-inositol-phosphate, myo-inositol 1,4-diphosphate, scyllo-inositol-1,3-diphosphate and scyllo-inositol-1,4-diphosphate. Also dephosphorylates in vitro other sugar-phosphates including D-galactose-1-phosphate, glucose-1-phosphate, glucose-6-phosphate, fructose-1-phosphate, beta-glycerophosphate and 2'-AMP. Responsible for the provision of inositol required for synthesis of phosphatidylinositol and polyphosphoinositides, and involved in maintaining normal brain function. Has been implicated as the pharmacological target for lithium Li(+) action in brain. The polypeptide is Inositol monophosphatase 1 (IMPA1) (Pongo abelii (Sumatran orangutan)).